The chain runs to 145 residues: MLMPKRVKHRKQFRGSMAGKATRGNKITNGEYGIVALEPCWIKANQIEAARVAMTRYIKRGGKVWIKIFPEKPVTHKPMGVRMGKGKGALEYWVAVVKPGRVLFEISGVPEDVAKEALRLATHKLPCKCKVVSRADLEGGESNEN.

It belongs to the universal ribosomal protein uL16 family. Part of the 50S ribosomal subunit.

Binds 23S rRNA and is also seen to make contacts with the A and possibly P site tRNAs. The polypeptide is Large ribosomal subunit protein uL16 (Agathobacter rectalis (strain ATCC 33656 / DSM 3377 / JCM 17463 / KCTC 5835 / VPI 0990) (Eubacterium rectale)).